Here is a 206-residue protein sequence, read N- to C-terminus: Guanylate kinase (206 aa).

A Guanylate kinase-like domain is found at 4–182; sequence ANLFIISAPS…AVQNLIHIIS (179 aa). ATP is bound at residue 11–18; the sequence is APSGAGKT.

This sequence belongs to the guanylate kinase family.

The protein resides in the cytoplasm. The catalysed reaction is GMP + ATP = GDP + ADP. Its function is as follows. Essential for recycling GMP and indirectly, cGMP. This is Guanylate kinase from Coxiella burnetii (strain RSA 493 / Nine Mile phase I).